Consider the following 37-residue polypeptide: Photosystem II reaction center protein T (37 aa).

Residues 3 to 23 (ALVYTFLLVGTLGIIFFAIFF) traverse the membrane as a helical segment.

Belongs to the PsbT family. As to quaternary structure, PSII is composed of 1 copy each of membrane proteins PsbA, PsbB, PsbC, PsbD, PsbE, PsbF, PsbH, PsbI, PsbJ, PsbK, PsbL, PsbM, PsbT, PsbY, PsbZ, Psb30/Ycf12, at least 3 peripheral proteins of the oxygen-evolving complex and a large number of cofactors. It forms dimeric complexes.

The protein resides in the plastid. It is found in the chloroplast thylakoid membrane. Found at the monomer-monomer interface of the photosystem II (PS II) dimer, plays a role in assembly and dimerization of PSII. PSII is a light-driven water plastoquinone oxidoreductase, using light energy to abstract electrons from H(2)O, generating a proton gradient subsequently used for ATP formation. This Spirogyra maxima (Green alga) protein is Photosystem II reaction center protein T.